Reading from the N-terminus, the 109-residue chain is Thioredoxin-like protein slr1139 (109 aa).

The Thioredoxin domain maps to 2 to 107 (SLLEITDAEF…LLELLKEELD (106 aa)). An intrachain disulfide couples C31 to C34.

This sequence belongs to the thioredoxin family.

This chain is Thioredoxin-like protein slr1139, found in Synechocystis sp. (strain ATCC 27184 / PCC 6803 / Kazusa).